Here is a 381-residue protein sequence, read N- to C-terminus: Deoxyguanosinetriphosphate triphosphohydrolase-like protein (381 aa).

One can recognise an HD domain in the interval 76–203 (RMTHTLEVAG…ADLSDEIAYT (128 aa)).

This sequence belongs to the dGTPase family. Type 2 subfamily.

The polypeptide is Deoxyguanosinetriphosphate triphosphohydrolase-like protein (Leptospira interrogans serogroup Icterohaemorrhagiae serovar copenhageni (strain Fiocruz L1-130)).